The following is a 117-amino-acid chain: Immunoglobulin kappa variable 1D-17 (117 aa).

Positions 1 to 22 (MDMRVPAQLLGLLLLWFPGARC) are cleaved as a signal peptide. A framework-1 region spans residues 23-45 (NIQMTQSPSAMSASVGDRVTITC). The Ig-like domain occupies 23 to 117 (NIQMTQSPSA…YYCLQHNSYP (95 aa)). Cys-45 and Cys-110 form a disulfide bridge. The interval 46–56 (RARQGISNYLA) is complementarity-determining-1. Residues 57 to 71 (WFQQKPGKVPKHLIY) are framework-2. The complementarity-determining-2 stretch occupies residues 72–78 (AASSLQS). The segment at 79 to 110 (GVPSRFSGSGSGTEFTLTISSLQPEDFATYYC) is framework-3. The interval 111–117 (LQHNSYP) is complementarity-determining-3.

As to quaternary structure, immunoglobulins are composed of two identical heavy chains and two identical light chains; disulfide-linked.

The protein localises to the secreted. Its subcellular location is the cell membrane. In terms of biological role, v region of the variable domain of immunoglobulin light chains that participates in the antigen recognition. Immunoglobulins, also known as antibodies, are membrane-bound or secreted glycoproteins produced by B lymphocytes. In the recognition phase of humoral immunity, the membrane-bound immunoglobulins serve as receptors which, upon binding of a specific antigen, trigger the clonal expansion and differentiation of B lymphocytes into immunoglobulins-secreting plasma cells. Secreted immunoglobulins mediate the effector phase of humoral immunity, which results in the elimination of bound antigens. The antigen binding site is formed by the variable domain of one heavy chain, together with that of its associated light chain. Thus, each immunoglobulin has two antigen binding sites with remarkable affinity for a particular antigen. The variable domains are assembled by a process called V-(D)-J rearrangement and can then be subjected to somatic hypermutations which, after exposure to antigen and selection, allow affinity maturation for a particular antigen. The protein is Immunoglobulin kappa variable 1D-17 of Homo sapiens (Human).